Consider the following 440-residue polypeptide: Xaa-Pro dipeptidase (440 aa).

5 residues coordinate Mn(2+): Asp-244, Asp-255, His-335, Glu-380, and Glu-419.

It belongs to the peptidase M24B family. Bacterial-type prolidase subfamily. It depends on Mn(2+) as a cofactor.

It carries out the reaction Xaa-L-Pro dipeptide + H2O = an L-alpha-amino acid + L-proline. Splits dipeptides with a prolyl residue in the C-terminal position. The chain is Xaa-Pro dipeptidase from Shewanella baltica (strain OS195).